Consider the following 334-residue polypeptide: Putative heme-binding peroxidase (334 aa).

His40 serves as the catalytic Proton acceptor. His169 contacts heme b. Trp185 serves as the catalytic Tryptophan radical intermediate.

The protein belongs to the peroxidase family. Cytochrome c peroxidase subfamily. The cofactor is heme b.

In terms of biological role, destroys radicals which are normally produced within the cells and which are toxic to biological systems. This is Putative heme-binding peroxidase from Cryptococcus neoformans var. neoformans serotype D (strain JEC21 / ATCC MYA-565) (Filobasidiella neoformans).